Reading from the N-terminus, the 373-residue chain is 3 beta-hydroxysteroid dehydrogenase/Delta 5--&gt;4-isomerase type 4 (373 aa).

Residue Tyr-155 is the Proton acceptor of the active site. Position 159 (Lys-159) interacts with NAD(+). The helical transmembrane segment at Leu-288–Val-308 threads the bilayer. Lys-350 bears the N6-acetyllysine mark.

Belongs to the 3-beta-HSD family. Skin, placenta, also detectable in ovary and adrenal gland.

It localises to the endoplasmic reticulum membrane. Its subcellular location is the mitochondrion membrane. The enzyme catalyses a 3beta-hydroxy-Delta(5)-steroid + NAD(+) = a 3-oxo-Delta(5)-steroid + NADH + H(+). The catalysed reaction is a 3-oxo-Delta(5)-steroid = a 3-oxo-Delta(4)-steroid. The protein operates within lipid metabolism; steroid biosynthesis. 3-beta-HSD is a bifunctional enzyme, that catalyzes the oxidative conversion of Delta(5)-ene-3-beta-hydroxy steroid, and the oxidative conversion of ketosteroids. The 3-beta-HSD enzymatic system plays a crucial role in the biosynthesis of all classes of hormonal steroids. In Rattus norvegicus (Rat), this protein is 3 beta-hydroxysteroid dehydrogenase/Delta 5--&gt;4-isomerase type 4 (Hsd3b6).